The following is a 368-amino-acid chain: MPKKTDTPDYKPSIYSLTRDELIAWAIEHGEKKFRASQIWDWLYKKRVQSFDEMTNISKDFIALLNENFVVNPLKQRIVQESADGTVKYLFELPDGMLIETVLMRQHYGLSVCVTTQVGCNIGCTFCASGLIKKQRDLNNGEITAQIMLVQKYFDERGQGERVSHIVVMGIGEPFDNYTNVLKFLRTVNDDNGLAIGARHITVSTSGLAHKIREFANEGVQVNLAVSLHAPNNELRSSIMRINRSFPLEKLFAAIEYYIETTNRRVTFEYIMLNGVNDTPENAQELADLTKKIRKLSYVNLIPYNPVSEHDQYSRSPKERVEAFYDVLKKNGVNCVVRQEHGTDIDAACGQLRSNTMKRDRQKAKVGQ.

The active-site Proton acceptor is the E100. A Radical SAM core domain is found at 106–344 (QHYGLSVCVT…CVVRQEHGTD (239 aa)). The cysteines at positions 113 and 349 are disulfide-linked. [4Fe-4S] cluster-binding residues include C120, C124, and C127. Residues 172–173 (GE), S204, 227–229 (SLH), and N305 each bind S-adenosyl-L-methionine. Residue C349 is the S-methylcysteine intermediate of the active site.

This sequence belongs to the radical SAM superfamily. RlmN family. The cofactor is [4Fe-4S] cluster.

Its subcellular location is the cytoplasm. It catalyses the reaction adenosine(2503) in 23S rRNA + 2 reduced [2Fe-2S]-[ferredoxin] + 2 S-adenosyl-L-methionine = 2-methyladenosine(2503) in 23S rRNA + 5'-deoxyadenosine + L-methionine + 2 oxidized [2Fe-2S]-[ferredoxin] + S-adenosyl-L-homocysteine. The enzyme catalyses adenosine(37) in tRNA + 2 reduced [2Fe-2S]-[ferredoxin] + 2 S-adenosyl-L-methionine = 2-methyladenosine(37) in tRNA + 5'-deoxyadenosine + L-methionine + 2 oxidized [2Fe-2S]-[ferredoxin] + S-adenosyl-L-homocysteine. Functionally, specifically methylates position 2 of adenine 2503 in 23S rRNA and position 2 of adenine 37 in tRNAs. This chain is Probable dual-specificity RNA methyltransferase RlmN, found in Streptococcus agalactiae serotype Ia (strain ATCC 27591 / A909 / CDC SS700).